The sequence spans 526 residues: MASNDYTQQATQSYGAYPTQPGQGYSQQSSQPYGQQSYSGYSQSTDTSGYGQSSYSSYGQSQNTGYGTQSTPQGYGSTGGYGSSQSSQSSYGQQSSYPGYGQQPAPSSTSGSYGSSSQSSSYGQPQSGSYSQQPSYGGQQQSYGQQQSYNPPQGYGQQNQYNSSSGGGGGGGGGGNYGQDQSSMSSGGGSGGGYGNQDQSGGGGSGGYGQQDRGGRGRGGSGGGGGGGGGGYNRSSGGYEPRGRGGGRGGRGGMGGSDRGGFNKFGGPRDQGSRHDSEQDNSDNNTIFVQGLGENVTIESVADYFKQIGIIKTNKKTGQPMINLYTDRETGKLKGEATVSFDDPPSAKAAIDWFDGKEFSGNPIKVSFATRRADFNRGGGNGRGGRGRGGPMGRGGYGGGGSGGGGRGGFPSGGGGGGGQQRAGDWKCPNPTCENMNFSWRNECNQCKAPKPDGPGGGPGGSHMGGNYGDDRRGGRGGYDRGGYRGRGGDRGGFRGGRGGGDRGGFGPGKMDSRGEHRQDRRERPY.

The segment covering 1 to 14 (MASNDYTQQATQSY) has biased composition (polar residues). Residues 1-286 (MASNDYTQQA…SEQDNSDNNT (286 aa)) form a disordered region. Composition is skewed to low complexity over residues 17–75 (YPTQ…PQGY) and 83–164 (SSQS…YNSS). A phosphoserine mark is found at serine 26 and serine 30. Phosphoserine; by ATM is present on serine 42. Composition is skewed to gly residues over residues 165–177 (SGGGGGGGGGGNY) and 186–209 (SGGGSGGGYGNQDQSGGGGSGGYG). 2 positions are modified to asymmetric dimethylarginine; alternate: arginine 216 and arginine 218. Arginine 216 and arginine 218 each carry omega-N-methylarginine; alternate. The segment covering 217 to 232 (GRGGSGGGGGGGGGGY) has biased composition (gly residues). A Phosphoserine modification is found at serine 221. Asymmetric dimethylarginine is present on residues arginine 242, arginine 244, arginine 248, arginine 251, and arginine 259. The span at 244-259 (RGGGRGGRGGMGGSDR) shows a compositional bias: gly residues. Serine 277 is modified (phosphoserine). Residues 285-371 (NTIFVQGLGE…NPIKVSFATR (87 aa)) form the RRM domain. The residue at position 286 (threonine 286) is a Phosphothreonine. A Glycyl lysine isopeptide (Lys-Gly) (interchain with G-Cter in SUMO2) cross-link involves residue lysine 334. Serine 340 carries the phosphoserine modification. 2 disordered regions span residues 375-424 (FNRG…QRAG) and 444-526 (CNQC…ERPY). Residues arginine 377, arginine 383, arginine 386, arginine 388, and arginine 394 each carry the asymmetric dimethylarginine modification. Gly residues predominate over residues 377–421 (RGGGNGRGGRGRGGPMGRGGYGGGGSGGGGRGGFPSGGGGGGGQQ). Arginine 407 is subject to Asymmetric dimethylarginine; alternate. Arginine 407 is modified (omega-N-methylarginine; alternate). The RanBP2-type zinc finger occupies 422–453 (RAGDWKCPNPTCENMNFSWRNECNQCKAPKPD). Gly residues predominate over residues 454-468 (GPGGGPGGSHMGGNY). Positions 469 to 493 (GDDRRGGRGGYDRGGYRGRGGDRGG) are enriched in basic and acidic residues. An asymmetric dimethylarginine mark is found at arginine 473, arginine 476, arginine 481, arginine 485, arginine 487, arginine 491, arginine 495, and arginine 498. The span at 494–508 (FRGGRGGGDRGGFGP) shows a compositional bias: gly residues. Arginine 503 bears the Asymmetric dimethylarginine; alternate mark. Arginine 503 carries the omega-N-methylarginine; alternate modification. Over residues 511–526 (MDSRGEHRQDRRERPY) the composition is skewed to basic and acidic residues.

This sequence belongs to the RRM TET family. In terms of assembly, self-oligomerizes (via N-terminal region). Oligomerization is essential for chromatin binding. Component of nuclear riboprotein complexes. Interacts with ILF3, TDRD3 and SF1. Interacts through its C-terminus with SFRS13A. Interacts with OTUB1 and SARNP. Interacts with LRSAM1. Interacts with SAFB1 in a DNA-dependent manner; this interaction tethers FUS to chromatin. Interacts with MATR3. Interacts with SNRNP70 and POLR2A; these interactions couple RNA transcription and splicing. Interacts (through its RNA-binding domain) with RALY (through its RNA-binding domain); both are components of the same RNPs. Arg-216 and Arg-218 are dimethylated, probably to asymmetric dimethylarginine. In terms of processing, phosphorylated in its N-terminal serine residues upon induced DNA damage. ATM and DNA-PK are able to phosphorylate FUS N-terminal region. Ubiquitous.

The protein resides in the nucleus. In terms of biological role, DNA/RNA-binding protein that plays a role in various cellular processes such as transcription regulation, RNA splicing, RNA transport, DNA repair and damage response. Binds to ssRNA containing the consensus sequence 5'-AGGUAA-3'. Binds to nascent pre-mRNAs and acts as a molecular mediator between RNA polymerase II and U1 small nuclear ribonucleoprotein thereby coupling transcription and splicing. Also binds its own pre-mRNA and autoregulates its expression; this autoregulation mechanism is mediated by non-sense-mediated decay. Plays a role in DNA repair mechanisms by promoting D-loop formation and homologous recombination during DNA double-strand break repair. In neuronal cells, plays crucial roles in dendritic spine formation and stability, RNA transport, mRNA stability and synaptic homeostasis. This is RNA-binding protein FUS (FUS) from Homo sapiens (Human).